Consider the following 607-residue polypeptide: UvrABC system protein C (607 aa).

The GIY-YIG domain occupies 14–93 (HKPGVYLMLD…IKKHKPRYNI (80 aa)). The UVR domain occupies 203-238 (RDLLAELKRQMLQASERLNFEQAGQFRDQIRALKTT).

It belongs to the UvrC family. In terms of assembly, interacts with UvrB in an incision complex.

The protein resides in the cytoplasm. Its function is as follows. The UvrABC repair system catalyzes the recognition and processing of DNA lesions. UvrC both incises the 5' and 3' sides of the lesion. The N-terminal half is responsible for the 3' incision and the C-terminal half is responsible for the 5' incision. The sequence is that of UvrABC system protein C from Desulfotalea psychrophila (strain LSv54 / DSM 12343).